The primary structure comprises 271 residues: Elongation factor Ts (271 aa).

The tract at residues 76-79 (TDFV) is involved in Mg(2+) ion dislocation from EF-Tu.

The protein belongs to the EF-Ts family.

The protein localises to the cytoplasm. Functionally, associates with the EF-Tu.GDP complex and induces the exchange of GDP to GTP. It remains bound to the aminoacyl-tRNA.EF-Tu.GTP complex up to the GTP hydrolysis stage on the ribosome. The chain is Elongation factor Ts from Mycobacterium tuberculosis (strain ATCC 25177 / H37Ra).